The sequence spans 411 residues: Probable indole-3-pyruvate monooxygenase YUCCA4 (411 aa).

21 to 26 (GAGPSG) serves as a coordination point for FAD. 183 to 188 (GCGNSG) lines the NADP(+) pocket.

This sequence belongs to the FMO family. FAD is required as a cofactor. Expressed in leaves, stems, flowers, buds and siliques. Detected in the apical gynoecium and in the developing ovules.

The protein localises to the cytoplasm. It is found in the endoplasmic reticulum membrane. It catalyses the reaction indole-3-pyruvate + NADPH + O2 + H(+) = (indol-3-yl)acetate + CO2 + NADP(+) + H2O. It functions in the pathway plant hormone metabolism; auxin biosynthesis. In terms of biological role, involved in auxin biosynthesis. Both isoforms are catalitically active. Involved during embryogenesis and seedling development. Required for the formation of floral organs and vascular tissues. Belongs to the set of redundant YUCCA genes probably responsible for auxin biosynthesis in shoots. In Arabidopsis thaliana (Mouse-ear cress), this protein is Probable indole-3-pyruvate monooxygenase YUCCA4 (YUC4).